Consider the following 802-residue polypeptide: Phenylalanine--tRNA ligase beta subunit (802 aa).

The 110-residue stretch at 40–149 (RPELDFVKIV…EGAEIGKTIR (110 aa)) folds into the tRNA-binding domain. Positions 407–484 (HKEVRIHTDI…RTRGYDTIQV (78 aa)) constitute a B5 domain. Residues aspartate 462, aspartate 468, glutamate 471, and glutamate 472 each contribute to the Mg(2+) site. The 93-residue stretch at 710–802 (SQFPEAEIDI…LAGKNGFVLR (93 aa)) folds into the FDX-ACB domain.

This sequence belongs to the phenylalanyl-tRNA synthetase beta subunit family. Type 1 subfamily. Tetramer of two alpha and two beta subunits. Requires Mg(2+) as cofactor.

The protein localises to the cytoplasm. The catalysed reaction is tRNA(Phe) + L-phenylalanine + ATP = L-phenylalanyl-tRNA(Phe) + AMP + diphosphate + H(+). In Leptospira borgpetersenii serovar Hardjo-bovis (strain L550), this protein is Phenylalanine--tRNA ligase beta subunit.